A 358-amino-acid polypeptide reads, in one-letter code: DnaJ homolog subfamily B member 11 (358 aa).

The first 22 residues, 1 to 22 (MAPQNLSTFCLLLLYLIGAVIA), serve as a signal peptide directing secretion. One can recognise a J domain in the interval 25–90 (DFYKILGVPR…EKRKQYDTYG (66 aa)). Thr188 carries the phosphothreonine modification. The N-linked (GlcNAc...) asparagine glycan is linked to Asn261.

In terms of assembly, part of a large chaperone multiprotein complex comprising DNAJB11, HSP90B1, HSPA5, HYOU, PDIA2, PDIA4, PDIA6, PPIB, SDF2L1, UGGT1 and very small amounts of ERP29, but not, or at very low levels, CALR nor CANX. Binds to denatured substrates in an ATP-independent manner. Interacts via the J domain with HSPA5 in an ATP-dependent manner. Post-translationally, contains high-mannose Endo H-sensitive carbohydrates. In terms of processing, cys-169, Cys-171, Cys-193 and Cys-196 form intramolecular disulfide bonds. The preferential partner for each Cys is not known. Thr-188 was reported to be phosphorylated upon DNA damage by ATM or ATR; however as this position has been shown to be in the ER lumen, the in vivo relevance is not proven. As to expression, widely expressed.

It is found in the endoplasmic reticulum lumen. In terms of biological role, as a co-chaperone for HSPA5 it is required for proper folding, trafficking or degradation of proteins. Binds directly to both unfolded proteins that are substrates for ERAD and nascent unfolded peptide chains, but dissociates from the HSPA5-unfolded protein complex before folding is completed. May help recruiting HSPA5 and other chaperones to the substrate. Stimulates HSPA5 ATPase activity. It is necessary for maturation and correct trafficking of PKD1. The sequence is that of DnaJ homolog subfamily B member 11 (DNAJB11) from Homo sapiens (Human).